The following is a 407-amino-acid chain: Protein NIS1 (407 aa).

Residues 40–61 (TSNSNSNSNSNSNTNSNTNSNS) show a composition bias toward low complexity. Disordered regions lie at residues 40-64 (TSNSNSNSNSNSNTNSNTNSNSDTK) and 251-315 (RSIR…KLNT). A phosphoserine mark is found at Ser260 and Ser264. Residues 266 to 276 (PTTTPATATKT) are compositionally biased toward low complexity. A compositionally biased stretch (polar residues) spans 277-302 (IKQNSTTPTTRSVYNKNVGRSNTSPS). Phosphoserine is present on residues Ser300 and Ser302. Basic residues predominate over residues 306–315 (HPKRRGKLNT). Residues 391–398 (IIIPDSQD) carry the SUMO-binding motif.

Interacts with CBF2, GIS1, NAP1, PRM8, REI1, SHS1 and SMT3.

It is found in the bud neck. Its subcellular location is the cytoplasm. It localises to the cell cortex. Its function is as follows. May be involved in a mitotic signaling network. Binds sumoylated proteins and may stabilize SUMO chains. In Saccharomyces cerevisiae (strain YJM789) (Baker's yeast), this protein is Protein NIS1 (NIS1).